The following is a 612-amino-acid chain: 1,8-cineole synthase, chloroplastic (612 aa).

The transit peptide at 1–52 (MALVCGAPLASRSCLNKSLISSTHELKPLRRTILPTLRWKSATPSINMCLTT) directs the protein to the chloroplast. Mg(2+)-binding residues include Asp363, Asp367, and Asp515. The short motif at 363-367 (DDIYD) is the DDXXD motif element.

It belongs to the terpene synthase family. Tpsd subfamily. It depends on Mg(2+) as a cofactor. Requires Mn(2+) as cofactor.

It is found in the plastid. It localises to the chloroplast. The enzyme catalyses (2E)-geranyl diphosphate + H2O = 1,8-cineole + diphosphate. The protein operates within terpene metabolism; oleoresin biosynthesis. Its function is as follows. Terpene synthase (TPS) involved in the biosynthesis of monoterpene natural products included in conifer oleoresin secretions and volatile emissions; these compounds contribute to biotic and abiotic stress defense against herbivores and pathogens. Catalyzes the conversion of (2E)-geranyl diphosphate (GPP) to 1,8-cineole. In Picea glauca (White spruce), this protein is 1,8-cineole synthase, chloroplastic.